We begin with the raw amino-acid sequence, 434 residues long: GPI-anchor transamidase component PIGU (434 aa).

Residues 1-3 (MAA) are Cytoplasmic-facing. Residues 4-22 (PLALVLVVAVTVRAALFRS) form a helical membrane-spanning segment. The Lumenal segment spans residues 23 to 78 (SLAEFISERVEVVSPLSSWKRVVEGLALLDLGVSPYSGAVFHETPLIIYLFHFLID). Residues 79–99 (YAELVFMITDALTAIALYFAI) form a helical membrane-spanning segment. Over 100 to 136 (QDFNKVVFKKQKLLLELDQYAPDVAELIRTPMEMRYI) the chain is Cytoplasmic. A run of 4 helical transmembrane segments spans residues 137 to 157 (PLKV…VAKS), 158 to 177 (TCAI…IKGS), 178 to 193 (VFLS…YQSL), and 194 to 204 (YPVTLFAPGLL). Residues 205 to 221 (YLLQRQYIPVKVKSKAF) are Cytoplasmic-facing. A cardiolipin is bound at residue Lys215. A helical transmembrane segment spans residues 222–243 (WIFSWEYAMMYTGSLVVIVCLS). Residues 244 to 285 (FFLLSSWDFIPAVYGFILSVPDLTPNIGLFWYFFAEMFEHFS) are Lumenal-facing. The helical transmembrane segment at 286 to 305 (LFFVCVFQINVFFYTVPLAI) threads the bilayer. Residues 306–310 (KLKEH) lie on the Cytoplasmic side of the membrane. A cardiolipin is bound at residue Lys308. The next 2 membrane-spanning stretches (helical) occupy residues 311–330 (PIFF…SYPT) and 331–344 (VGDV…FPVW). At 345 to 353 (NHLYRFLRN) the chain is on the cytoplasmic side. The helical transmembrane segment at 354–371 (IFVLTCIIIVCSLLFPVL) threads the bilayer. Over 372-383 (WHLWIYAGSANS) the chain is Lumenal. Positions 382 and 384 each coordinate a 2-acyl-6-[6-phosphoethanolamine-alpha-D-mannosyl-(1-&gt;2)-6-phosphoethanolamine-alpha-D-mannosyl-(1-&gt;6)-2-phosphoethanolamine-alpha-D-mannosyl-(1-&gt;4)-alpha-D-glucosaminyl]-1-(1-radyl,2-acyl-sn-glycero-3-phospho)-1D-myo-inositol. The helical transmembrane segment at 384–405 (NFFYAITLTFNVGQILLISDYF) threads the bilayer. Over 406–434 (YAFLRREYYLTHGLYLTAKDGTEAMLVLK) the chain is Cytoplasmic.

This sequence belongs to the PIGU family. Heteropentamer. Part of the GPI-anchor transamidase complex, consisting of PIGK, PIGT, PIGS, PIGU and GAA1.

It is found in the endoplasmic reticulum membrane. It participates in glycolipid biosynthesis; glycosylphosphatidylinositol-anchor biosynthesis. Its function is as follows. Component of the glycosylphosphatidylinositol-anchor (GPI-anchor) transamidase (GPI-T) complex that catalyzes the formation of the linkage between a proprotein and a GPI-anchor and participates in GPI anchored protein biosynthesis. Binds the lipid portion of GPI-anchor. May act as an organizer in the transmembrane layer to recruit other subunits, and thus is essential for assembly of the complex. The sequence is that of GPI-anchor transamidase component PIGU from Mus musculus (Mouse).